Here is a 323-residue protein sequence, read N- to C-terminus: tRNA dimethylallyltransferase (323 aa).

12–19 provides a ligand contact to ATP; the sequence is GPTAAGKT. 14–19 lines the substrate pocket; sequence TAAGKT. Interaction with substrate tRNA stretches follow at residues 37-40 and 161-165; these read DSAL and QRLIR.

This sequence belongs to the IPP transferase family. Monomer. Mg(2+) serves as cofactor.

It catalyses the reaction adenosine(37) in tRNA + dimethylallyl diphosphate = N(6)-dimethylallyladenosine(37) in tRNA + diphosphate. Catalyzes the transfer of a dimethylallyl group onto the adenine at position 37 in tRNAs that read codons beginning with uridine, leading to the formation of N6-(dimethylallyl)adenosine (i(6)A). The protein is tRNA dimethylallyltransferase of Pseudomonas putida (strain ATCC 700007 / DSM 6899 / JCM 31910 / BCRC 17059 / LMG 24140 / F1).